The sequence spans 167 residues: Leptin (167 aa).

Residues 1-21 (MRCGPLYRFLWLWPYLSYVEA) form the signal peptide. The cysteines at positions 117 and 167 are disulfide-linked.

This sequence belongs to the leptin family.

It is found in the secreted. Functionally, key player in the regulation of energy balance and body weight control. Once released into the circulation, has central and peripheral effects by binding LEPR, found in many tissues, which results in the activation of several major signaling pathways. In the hypothalamus, acts as an appetite-regulating factor that induces a decrease in food intake and an increase in energy consumption by inducing anorexinogenic factors and suppressing orexigenic neuropeptides, also regulates bone mass and secretion of hypothalamo-pituitary-adrenal hormones. In the periphery, increases basal metabolism, influences reproductive function, regulates pancreatic beta-cell function and insulin secretion, is pro-angiogenic for endothelial cell and affects innate and adaptive immunity. In the arcuate nucleus of the hypothalamus, activates by depolarization POMC neurons inducing FOS and SOCS3 expression to release anorexigenic peptides and inhibits by hyperpolarization NPY neurons inducing SOCS3 with a consequent reduction on release of orexigenic peptides. In addition to its known satiety inducing effect, has a modulatory role in nutrient absorption. In the intestine, reduces glucose absorption by enterocytes by activating PKC and leading to a sequential activation of p38, PI3K and ERK signaling pathways which exerts an inhibitory effect on glucose absorption. Acts as a growth factor on certain tissues, through the activation of different signaling pathways increases expression of genes involved in cell cycle regulation such as CCND1, via JAK2-STAT3 pathway, or VEGFA, via MAPK1/3 and PI3K-AKT1 pathways. May also play an apoptotic role via JAK2-STAT3 pathway and up-regulation of BIRC5 expression. Pro-angiogenic, has mitogenic activity on vascular endothelial cells and plays a role in matrix remodeling by regulating the expression of matrix metalloproteinases (MMPs) and tissue inhibitors of metalloproteinases (TIMPs). In innate immunity, modulates the activity and function of neutrophils by increasing chemotaxis and the secretion of oxygen radicals. Increases phagocytosis by macrophages and enhances secretion of pro-inflammatory mediators. Increases cytotoxic ability of NK cells. Plays a pro-inflammatory role, in synergy with IL1B, by inducing NOS2 which promotes the production of IL6, IL8 and Prostaglandin E2, through a signaling pathway that involves JAK2, PI3K, MAP2K1/MEK1 and MAPK14/p38. In adaptive immunity, promotes the switch of memory T-cells towards T helper-1 cell immune responses. Increases CD4(+)CD25(-) T-cell proliferation and reduces autophagy during TCR (T-cell receptor) stimulation, through MTOR signaling pathway activation and BCL2 up-regulation. This is Leptin (LEP) from Capra hircus (Goat).